A 385-amino-acid chain; its full sequence is 1-deoxy-D-xylulose 5-phosphate reductoisomerase (385 aa).

Thr10, Gly11, Ser12, Ile13, and Asn124 together coordinate NADPH. Lys125 is a binding site for 1-deoxy-D-xylulose 5-phosphate. Glu126 is an NADPH binding site. Asp150 contributes to the Mn(2+) binding site. Residues Ser151, Glu152, Ser176, and His199 each contribute to the 1-deoxy-D-xylulose 5-phosphate site. Glu152 provides a ligand contact to Mn(2+). Gly205 is an NADPH binding site. The 1-deoxy-D-xylulose 5-phosphate site is built by Ser212, Asn217, Lys218, and Glu221. Residue Glu221 participates in Mn(2+) binding.

The protein belongs to the DXR family. Requires Mg(2+) as cofactor. It depends on Mn(2+) as a cofactor.

It catalyses the reaction 2-C-methyl-D-erythritol 4-phosphate + NADP(+) = 1-deoxy-D-xylulose 5-phosphate + NADPH + H(+). It participates in isoprenoid biosynthesis; isopentenyl diphosphate biosynthesis via DXP pathway; isopentenyl diphosphate from 1-deoxy-D-xylulose 5-phosphate: step 1/6. In terms of biological role, catalyzes the NADPH-dependent rearrangement and reduction of 1-deoxy-D-xylulose-5-phosphate (DXP) to 2-C-methyl-D-erythritol 4-phosphate (MEP). This chain is 1-deoxy-D-xylulose 5-phosphate reductoisomerase, found in Clostridium botulinum (strain Alaska E43 / Type E3).